The primary structure comprises 102 residues: Large ribosomal subunit protein bL21 (102 aa).

The protein belongs to the bacterial ribosomal protein bL21 family. Part of the 50S ribosomal subunit. Contacts protein L20.

This protein binds to 23S rRNA in the presence of protein L20. This Nitratiruptor sp. (strain SB155-2) protein is Large ribosomal subunit protein bL21.